We begin with the raw amino-acid sequence, 528 residues long: Putative galacturonosyltransferase 2 (528 aa).

This sequence belongs to the glycosyltransferase 8 family.

It participates in glycan metabolism; pectin biosynthesis. May be involved in pectin and/or xylans biosynthesis in cell walls. In Arabidopsis thaliana (Mouse-ear cress), this protein is Putative galacturonosyltransferase 2 (GAUT2).